Reading from the N-terminus, the 748-residue chain is Putative pre-mRNA-splicing factor ATP-dependent RNA helicase DHX32 (748 aa).

Positions 74 to 240 constitute a Helicase ATP-binding domain; the sequence is LEHLAHNQIV…YGNAPLVEAE (167 aa). Residue 87–94 coordinates ATP; that stretch reads AGPKSGKS. A Helicase C-terminal domain is found at 263–439; sequence RLLFEIHHTK…SMVLFLKRMD (177 aa). The tract at residues 706–748 is disordered; it reads SETKDLLQQDQTPDTPPTEEPREEEPLHEANDEGTAEQRCIIQ.

Belongs to the DEAD box helicase family. DEAH subfamily.

The protein resides in the nucleus. Its subcellular location is the mitochondrion. It carries out the reaction ATP + H2O = ADP + phosphate + H(+). The chain is Putative pre-mRNA-splicing factor ATP-dependent RNA helicase DHX32 (dhx32) from Xenopus laevis (African clawed frog).